The sequence spans 98 residues: Protein E7 (98 aa).

Positions 1 to 40 (MRGETPTLQDYVLDLQPEATDLHCYEQLPDSSDEEDVIDS) are E7 terminal domain. The short motif at 22–26 (LHCYE) is the LXCXE motif; interaction with host RB1 and TMEM173/STING element. Residues 58–94 (CCQCKSTLRLCVQSTQVDIRILQELLMGSFGIVCPNC) fold into a zinc finger. A Nuclear export signal motif is present at residues 76 to 84 (IRILQELLM).

Belongs to the papillomaviridae E7 protein family. Homodimer. Homooligomer. Interacts with host RB1; this interaction induces dissociation of RB1-E2F1 complex thereby disrupting RB1 activity. Interacts with host EP300; this interaction represses EP300 transcriptional activity. Interacts with protein E2; this interaction inhibits E7 oncogenic activity. Interacts with host TMEM173/STING; this interaction impairs the ability of TMEM173/STING to sense cytosolic DNA and promote the production of type I interferon (IFN-alpha and IFN-beta). In terms of processing, highly phosphorylated.

The protein resides in the host cytoplasm. The protein localises to the host nucleus. E7 protein has both transforming and trans-activating activities. Disrupts the function of host retinoblastoma protein RB1/pRb, which is a key regulator of the cell cycle. Induces the disassembly of the E2F1 transcription factors from RB1, with subsequent transcriptional activation of E2F1-regulated S-phase genes. Inactivation of the ability of RB1 to arrest the cell cycle is critical for cellular transformation, uncontrolled cellular growth and proliferation induced by viral infection. Stimulation of progression from G1 to S phase allows the virus to efficiently use the cellular DNA replicating machinery to achieve viral genome replication. Interferes with histone deacetylation mediated by HDAC1 and HDAC2, leading to activation of transcription. Functionally, plays a role in viral genome replication by driving entry of quiescent cells into the cell cycle. Stimulation of progression from G1 to S phase allows the virus to efficiently use the cellular DNA replicating machinery to achieve viral genome replication. E7 protein has both transforming and trans-activating activities. Induces the disassembly of the E2F1 transcription factor from RB1, with subsequent transcriptional activation of E2F1-regulated S-phase genes. Interferes with host histone deacetylation mediated by HDAC1 and HDAC2, leading to transcription activation. Also plays a role in the inhibition of both antiviral and antiproliferative functions of host interferon alpha. Interaction with host TMEM173/STING impairs the ability of TMEM173/STING to sense cytosolic DNA and promote the production of type I interferon (IFN-alpha and IFN-beta). This chain is Protein E7, found in Homo sapiens (Human).